The following is a 186-amino-acid chain: Elongation factor P (186 aa).

The protein belongs to the elongation factor P family.

The protein localises to the cytoplasm. It functions in the pathway protein biosynthesis; polypeptide chain elongation. In terms of biological role, involved in peptide bond synthesis. Stimulates efficient translation and peptide-bond synthesis on native or reconstituted 70S ribosomes in vitro. Probably functions indirectly by altering the affinity of the ribosome for aminoacyl-tRNA, thus increasing their reactivity as acceptors for peptidyl transferase. This chain is Elongation factor P, found in Synechococcus sp. (strain CC9902).